The chain runs to 201 residues: Histidine biosynthesis bifunctional protein HisIE (201 aa).

Residues 1-111 (MKINWQKVDN…EKTTQPDWIF (111 aa)) form a phosphoribosyl-AMP cyclohydrolase region. A phosphoribosyl-ATP pyrophosphohydrolase region spans residues 112–201 (LSKLERLIAS…IHKLKERHTK (90 aa)).

It in the N-terminal section; belongs to the PRA-CH family. In the C-terminal section; belongs to the PRA-PH family.

Its subcellular location is the cytoplasm. It carries out the reaction 1-(5-phospho-beta-D-ribosyl)-ATP + H2O = 1-(5-phospho-beta-D-ribosyl)-5'-AMP + diphosphate + H(+). It catalyses the reaction 1-(5-phospho-beta-D-ribosyl)-5'-AMP + H2O = 1-(5-phospho-beta-D-ribosyl)-5-[(5-phospho-beta-D-ribosylamino)methylideneamino]imidazole-4-carboxamide. It functions in the pathway amino-acid biosynthesis; L-histidine biosynthesis; L-histidine from 5-phospho-alpha-D-ribose 1-diphosphate: step 2/9. Its pathway is amino-acid biosynthesis; L-histidine biosynthesis; L-histidine from 5-phospho-alpha-D-ribose 1-diphosphate: step 3/9. This is Histidine biosynthesis bifunctional protein HisIE (hisI) from Pasteurella multocida (strain Pm70).